Consider the following 118-residue polypeptide: Small ribosomal subunit protein uS13 (118 aa).

A disordered region spans residues 94–118 (SLPLRGQRTKTNARTRKGPRKPIRK).

The protein belongs to the universal ribosomal protein uS13 family. In terms of assembly, part of the 30S ribosomal subunit. Forms a loose heterodimer with protein S19. Forms two bridges to the 50S subunit in the 70S ribosome.

In terms of biological role, located at the top of the head of the 30S subunit, it contacts several helices of the 16S rRNA. In the 70S ribosome it contacts the 23S rRNA (bridge B1a) and protein L5 of the 50S subunit (bridge B1b), connecting the 2 subunits; these bridges are implicated in subunit movement. Contacts the tRNAs in the A and P-sites. This Shewanella halifaxensis (strain HAW-EB4) protein is Small ribosomal subunit protein uS13.